The following is a 254-amino-acid chain: Fructose-1,6-bisphosphatase (254 aa).

4 residues coordinate Mg(2+): Glu68, Asp84, Leu86, and Asp87. Residues 87 to 89 (DGS), Arg171, Ile176, and Arg195 contribute to the substrate site. Residue Asp202 coordinates Mg(2+).

It belongs to the inositol monophosphatase superfamily. FBPase class 4 family. As to quaternary structure, homodimer. The cofactor is Mg(2+).

It carries out the reaction beta-D-fructose 1,6-bisphosphate + H2O = beta-D-fructose 6-phosphate + phosphate. Inhibited by Li(+), ADP, ATP and glucose-6-phosphate. Functionally, catalyzes the conversion of D-fructose 1,6-bisphosphate to D-fructose 6-phosphate. In vitro, also has weak activity with inositol-1-phosphate, glucose-1-phosphate and glycerol-2-phosphate. The polypeptide is Fructose-1,6-bisphosphatase (Pyrococcus furiosus (strain ATCC 43587 / DSM 3638 / JCM 8422 / Vc1)).